Reading from the N-terminus, the 596-residue chain is Pheromone-processing carboxypeptidase KEX1 (596 aa).

An N-terminal signal peptide occupies residues 1-17; it reads MLGLATTVTLESSGCSS. Residues 18 to 486 lie on the Lumenal side of the membrane; sequence KMCFRLLCSV…KIAAWEAYYK (469 aa). N-linked (GlcNAc...) asparagine glycans are attached at residues N54 and N90. Residue S154 is part of the active site. Residues N177, N367, N372, N404, N412, and N464 are each glycosylated (N-linked (GlcNAc...) asparagine). A disordered region spans residues 447–469; the sequence is SRIDGLKGAPTSVGAHPNSTTAE. A helical membrane pass occupies residues 487–507; the sequence is SGEVALVVVAIAASLWGFFIW. Residues 508–596 are Cytoplasmic-facing; sequence RSKRREKGLE…QSHAGMGKSR (89 aa). The tract at residues 539 to 596 is disordered; the sequence is KRRGRMDVESAPRPDEAELETLYNAAEGSDPQDGEENFSDGKGDNEKAQSHAGMGKSR. Composition is skewed to basic and acidic residues over residues 543–554 and 577–587; these read RMDVESAPRPDE and SDGKGDNEKAQ.

The protein belongs to the peptidase S10 family.

The protein resides in the golgi apparatus. It is found in the trans-Golgi network membrane. It carries out the reaction Preferential release of a C-terminal arginine or lysine residue.. Functionally, protease with a carboxypeptidase B-like function involved in the C-terminal processing of the lysine and arginine residues from protein precursors. Promotes cell fusion and is involved in the programmed cell death. The chain is Pheromone-processing carboxypeptidase KEX1 (KEX1) from Arthroderma benhamiae (strain ATCC MYA-4681 / CBS 112371) (Trichophyton mentagrophytes).